The primary structure comprises 58 residues: Small ribosomal subunit protein bS21 (58 aa).

A disordered region spans residues 34-58 (KREHYESPSVRRKKKSEAARRRKRR). Residues 43–58 (VRRKKKSEAARRRKRR) are compositionally biased toward basic residues.

Belongs to the bacterial ribosomal protein bS21 family.

In Caldicellulosiruptor bescii (strain ATCC BAA-1888 / DSM 6725 / KCTC 15123 / Z-1320) (Anaerocellum thermophilum), this protein is Small ribosomal subunit protein bS21.